A 380-amino-acid chain; its full sequence is Lipid-A-disaccharide synthase (380 aa).

Belongs to the LpxB family.

It carries out the reaction a lipid X + a UDP-2-N,3-O-bis[(3R)-3-hydroxyacyl]-alpha-D-glucosamine = a lipid A disaccharide + UDP + H(+). Its pathway is bacterial outer membrane biogenesis; LPS lipid A biosynthesis. Functionally, condensation of UDP-2,3-diacylglucosamine and 2,3-diacylglucosamine-1-phosphate to form lipid A disaccharide, a precursor of lipid A, a phosphorylated glycolipid that anchors the lipopolysaccharide to the outer membrane of the cell. This is Lipid-A-disaccharide synthase from Vibrio vulnificus (strain CMCP6).